Consider the following 119-residue polypeptide: Tubulin-specific chaperone A (119 aa).

It belongs to the TBCA family. Supercomplex made of cofactors A to E. Cofactors A and D function by capturing and stabilizing tubulin in a quasi-native conformation. Cofactor E binds to the cofactor D-tubulin complex; interaction with cofactor C then causes the release of tubulin polypeptides that are committed to the native state.

Its subcellular location is the cytoplasm. It localises to the cytoskeleton. Functionally, required for the maintenance of microtubule structures and cell polarity. Beta-tubulin-folding protein; may have a regulatory role in the tubulin-folding pathway. The chain is Tubulin-specific chaperone A (alp31) from Schizosaccharomyces pombe (strain 972 / ATCC 24843) (Fission yeast).